Reading from the N-terminus, the 255-residue chain is 3-deoxy-manno-octulosonate cytidylyltransferase (255 aa).

The protein belongs to the KdsB family.

The protein resides in the cytoplasm. It catalyses the reaction 3-deoxy-alpha-D-manno-oct-2-ulosonate + CTP = CMP-3-deoxy-beta-D-manno-octulosonate + diphosphate. Its pathway is nucleotide-sugar biosynthesis; CMP-3-deoxy-D-manno-octulosonate biosynthesis; CMP-3-deoxy-D-manno-octulosonate from 3-deoxy-D-manno-octulosonate and CTP: step 1/1. The protein operates within bacterial outer membrane biogenesis; lipopolysaccharide biosynthesis. Its function is as follows. Activates KDO (a required 8-carbon sugar) for incorporation into bacterial lipopolysaccharide in Gram-negative bacteria. This is 3-deoxy-manno-octulosonate cytidylyltransferase from Psychromonas ingrahamii (strain DSM 17664 / CCUG 51855 / 37).